Reading from the N-terminus, the 528-residue chain is MYSFFLVCPVAFLGFTICYLVYVELFPHPFPKSLPLVGFRKEIFSRPRASFRQILGSSQTLAEGYEQYGAAGRPYVVPDTTFQPQVMLPQNHIKWLSTQPESVLSSEAVRVERNGINYLPVKSDLKSSVLFIDKIIGKSLSQNLDLIQPDMYDEIRHTVDSTMGTDVASWREVNLSEAMSTIIDRTGNRILFGLSLCRNEVYLRILRCFIIFMGASTLLIGQLPPWFLRPIAGVLITIPTFIFKKLSVAYVRPLVKERMQSVSGEEDDQGPGKTSHDFVTQSINSVRKFKITIEGDVASYLAEQFLFLAFAAMATTGAAATNIFLDILSASPQINLYELLHLEAASIFKSEADWMSPSSMKEMINTDSAIRESLRKNTLQSRGLLKQVMPKDGIMLPDGAHVPHGMWLGVPAQAMQNDDEFYPNADGYDPLRFARLKADAEAECKDGPSSGKHLDAAHPSDKYLSFSYGRSSCPGRWFAVRLLKLIIAYIAVHYDIKPLAHRPKNFSFGDASIPSFTTKIMVRRRKQG.

A helical membrane pass occupies residues 3-23; it reads SFFLVCPVAFLGFTICYLVYV. Cys473 contacts heme.

This sequence belongs to the cytochrome P450 family. It depends on heme as a cofactor.

The protein localises to the membrane. The catalysed reaction is 4beta-carboxyl motiol + reduced [NADPH--hemoprotein reductase] + O2 = 2alpha-hydroxyl, 4beta-carboxyl motiol + oxidized [NADPH--hemoprotein reductase] + H2O + H(+). It carries out the reaction 2-deoxypolytolypin + reduced [NADPH--hemoprotein reductase] + O2 = polytolypin + oxidized [NADPH--hemoprotein reductase] + H2O + H(+). The protein operates within secondary metabolite biosynthesis; terpenoid biosynthesis. In terms of biological role, cytochrome P450 monooxygenase; part of the gene cluster that mediates the biosynthesis of antifungal fernane-type triterpenoid polytolypin. PolB acts as a hydroxylase and installs the 2-alpha-hydroxyl group in polytolypin. Within the pathway, the triterpene cyclase polA first catalyzes the cyclization of 2,3-oxidosqualene to motiol, polC converts the 4-alpha-methyl group of motiol to a carboxyl group, polB is responsible for appending a hydroxyl group at the 2-alpha position and polE is a dual functional P450, which can catalyze the formation of both the 1-beta-hydroxyl group and 10-beta-carboxyl group. The chain is Cytochrome P450 monooxygenase polB from Polytolypa hystricis (strain UAMH7299).